The primary structure comprises 123 residues: UPF0102 protein Pcar_2217 (123 aa).

Belongs to the UPF0102 family.

This chain is UPF0102 protein Pcar_2217, found in Syntrophotalea carbinolica (strain DSM 2380 / NBRC 103641 / GraBd1) (Pelobacter carbinolicus).